Reading from the N-terminus, the 105-residue chain is Met repressor (105 aa).

This sequence belongs to the MetJ family. As to quaternary structure, homodimer.

It is found in the cytoplasm. Its function is as follows. This regulatory protein, when combined with SAM (S-adenosylmethionine) represses the expression of the methionine regulon and of enzymes involved in SAM synthesis. This is Met repressor from Haemophilus influenzae (strain 86-028NP).